The primary structure comprises 27 residues: Urumin (27 aa).

In terms of tissue distribution, expressed by the skin glands.

It localises to the secreted. Its function is as follows. Amphibian peptide that shows viricidal activity against human H1N1 influenza A virus. It specifically targets the conserved stalk region of H1 hemagglutinin, and acts by actively destroying influenza virions. It shows a reduced activity on human H3N2 influenza A virus and no activity against other viruses (HIV, SIV, HSV-II, hepatitis C, Ebola, Zika, and Dengue viruses). In vivo, the peptide also protects mice infected with mouse-adapted influenza virus from lethal influenza infection. The peptide synthesized in D-amino acids is inactive. The sequence is that of Urumin from Hydrophylax bahuvistara (Wide-spread fungoid frog).